Here is a 366-residue protein sequence, read N- to C-terminus: Carbamoyl phosphate synthase small chain (366 aa).

The tract at residues 1–172 (MYGILVLEDG…TYNAENEKTS (172 aa)) is CPSase. Ser45, Gly220, and Gly222 together coordinate L-glutamine. In terms of domain architecture, Glutamine amidotransferase type-1 spans 172–363 (SCVLIDCGVK…VELGIKFKAE (192 aa)). The active-site Nucleophile is the Cys247. L-glutamine-binding residues include Leu248, Gln251, Asn289, Gly291, and Phe292. Residues His336 and Glu338 contribute to the active site.

This sequence belongs to the CarA family. As to quaternary structure, composed of two chains; the small (or glutamine) chain promotes the hydrolysis of glutamine to ammonia, which is used by the large (or ammonia) chain to synthesize carbamoyl phosphate. Tetramer of heterodimers (alpha,beta)4.

The enzyme catalyses hydrogencarbonate + L-glutamine + 2 ATP + H2O = carbamoyl phosphate + L-glutamate + 2 ADP + phosphate + 2 H(+). The catalysed reaction is L-glutamine + H2O = L-glutamate + NH4(+). Its pathway is amino-acid biosynthesis; L-arginine biosynthesis; carbamoyl phosphate from bicarbonate: step 1/1. It participates in pyrimidine metabolism; UMP biosynthesis via de novo pathway; (S)-dihydroorotate from bicarbonate: step 1/3. Functionally, small subunit of the glutamine-dependent carbamoyl phosphate synthetase (CPSase). CPSase catalyzes the formation of carbamoyl phosphate from the ammonia moiety of glutamine, carbonate, and phosphate donated by ATP, constituting the first step of 2 biosynthetic pathways, one leading to arginine and/or urea and the other to pyrimidine nucleotides. The small subunit (glutamine amidotransferase) binds and cleaves glutamine to supply the large subunit with the substrate ammonia. The sequence is that of Carbamoyl phosphate synthase small chain from Methanococcus maripaludis (strain C7 / ATCC BAA-1331).